Consider the following 434-residue polypeptide: Mitochondrial distribution and morphology protein 10 (434 aa).

The protein belongs to the MDM10 family. As to quaternary structure, component of the ER-mitochondria encounter structure (ERMES) or MDM complex, composed of mmm1, mdm10, mdm12 and mdm34. Associates with the mitochondrial outer membrane sorting assembly machinery SAM(core) complex.

It localises to the mitochondrion outer membrane. Functionally, component of the ERMES/MDM complex, which serves as a molecular tether to connect the endoplasmic reticulum and mitochondria. Components of this complex are involved in the control of mitochondrial shape and protein biogenesis and may function in phospholipid exchange. mdm10 is involved in the late assembly steps of the general translocase of the mitochondrial outer membrane (TOM complex). Functions in the tom40-specific route of the assembly of outer membrane beta-barrel proteins, including the association of tom40 with the receptor tom22 and small TOM proteins. Can associate with the SAM(core) complex as well as the mdm12-mmm1 complex, both involved in late steps of the major beta-barrel assembly pathway, that is responsible for biogenesis of all outer membrane beta-barrel proteins. May act as a switch that shuttles between both complexes and channels precursor proteins into the tom40-specific pathway. Plays a role in mitochondrial morphology and in the inheritance of mitochondria. This chain is Mitochondrial distribution and morphology protein 10 (mdmB), found in Aspergillus niger (strain ATCC MYA-4892 / CBS 513.88 / FGSC A1513).